Reading from the N-terminus, the 598-residue chain is NADH-quinone oxidoreductase subunit C/D (598 aa).

The NADH dehydrogenase I subunit C stretch occupies residues 1 to 189; that stretch reads MTDLTTSDST…DPFVLTKQKE (189 aa). An NADH dehydrogenase I subunit D region spans residues 213 to 598; the sequence is DFMFLNLGPN…IDFVMSDVDR (386 aa).

The protein in the N-terminal section; belongs to the complex I 30 kDa subunit family. This sequence in the C-terminal section; belongs to the complex I 49 kDa subunit family. In terms of assembly, NDH-1 is composed of 13 different subunits. Subunits NuoB, CD, E, F, and G constitute the peripheral sector of the complex.

Its subcellular location is the cell inner membrane. It carries out the reaction a quinone + NADH + 5 H(+)(in) = a quinol + NAD(+) + 4 H(+)(out). Functionally, NDH-1 shuttles electrons from NADH, via FMN and iron-sulfur (Fe-S) centers, to quinones in the respiratory chain. The immediate electron acceptor for the enzyme in this species is believed to be ubiquinone. Couples the redox reaction to proton translocation (for every two electrons transferred, four hydrogen ions are translocated across the cytoplasmic membrane), and thus conserves the redox energy in a proton gradient. In Yersinia enterocolitica serotype O:8 / biotype 1B (strain NCTC 13174 / 8081), this protein is NADH-quinone oxidoreductase subunit C/D.